A 239-amino-acid polypeptide reads, in one-letter code: 7-cyano-7-deazaguanine synthase (239 aa).

Position 13–23 (13–23 (FSGGQDSTTCL)) interacts with ATP. 4 residues coordinate Zn(2+): C201, C216, C219, and C222.

Belongs to the QueC family. Zn(2+) serves as cofactor.

It carries out the reaction 7-carboxy-7-deazaguanine + NH4(+) + ATP = 7-cyano-7-deazaguanine + ADP + phosphate + H2O + H(+). It participates in purine metabolism; 7-cyano-7-deazaguanine biosynthesis. Its function is as follows. Catalyzes the ATP-dependent conversion of 7-carboxy-7-deazaguanine (CDG) to 7-cyano-7-deazaguanine (preQ(0)). This is 7-cyano-7-deazaguanine synthase from Bradyrhizobium sp. (strain BTAi1 / ATCC BAA-1182).